The following is an 80-amino-acid chain: Small ribosomal subunit protein bS18 (80 aa).

The protein belongs to the bacterial ribosomal protein bS18 family. As to quaternary structure, part of the 30S ribosomal subunit. Forms a tight heterodimer with protein bS6.

Its function is as follows. Binds as a heterodimer with protein bS6 to the central domain of the 16S rRNA, where it helps stabilize the platform of the 30S subunit. This Staphylococcus epidermidis (strain ATCC 35984 / DSM 28319 / BCRC 17069 / CCUG 31568 / BM 3577 / RP62A) protein is Small ribosomal subunit protein bS18.